Consider the following 65-residue polypeptide: Large ribosomal subunit protein bL35 (65 aa).

The interval 1–52 (MPKIKTNRGAAKRFKRTGSGGFKCVQSHRRHILTKKSTKRKRQLRSPDMVHP) is disordered. The span at 26–44 (QSHRRHILTKKSTKRKRQL) shows a compositional bias: basic residues.

It belongs to the bacterial ribosomal protein bL35 family.

In Methylococcus capsulatus (strain ATCC 33009 / NCIMB 11132 / Bath), this protein is Large ribosomal subunit protein bL35.